Reading from the N-terminus, the 215-residue chain is Probable transaldolase (215 aa).

Residue Lys83 is the Schiff-base intermediate with substrate of the active site.

This sequence belongs to the transaldolase family. Type 3B subfamily.

It localises to the cytoplasm. The catalysed reaction is D-sedoheptulose 7-phosphate + D-glyceraldehyde 3-phosphate = D-erythrose 4-phosphate + beta-D-fructose 6-phosphate. It functions in the pathway carbohydrate degradation; pentose phosphate pathway; D-glyceraldehyde 3-phosphate and beta-D-fructose 6-phosphate from D-ribose 5-phosphate and D-xylulose 5-phosphate (non-oxidative stage): step 2/3. Functionally, transaldolase is important for the balance of metabolites in the pentose-phosphate pathway. The polypeptide is Probable transaldolase (Bdellovibrio bacteriovorus (strain ATCC 15356 / DSM 50701 / NCIMB 9529 / HD100)).